Consider the following 541-residue polypeptide: MFRILSFLCSWILIAFAQPDMSWFFSLLGSAVGYGLLWYSLEPQKSPKLSWRQLTSLLFLWSVTVYGVHFSWMLSDLYVGKFIYVVWGVLISLLALLFTAFSCLLFFIVRKKHTKILWCLPGLWVAVEMVRFYFLCSGMSLDYLGWPITANAYGRQFGGFFGWAGESFILVATGISFYQVLLRKCFSRYVWLGCLLFPYILGGVHYEYLKNTFSKEENLRVAVIQPASSMLLEGPWSGSPAMAWQRLVSLSSIVRKPVDLLIFPEVSVPFGRDRKVYPYDDSQVILSPLTHFKHQDELLANVDWMQALSNHFNCPILMGLERWEELDSKLHLYNSAECISQHGELIGYDKRILVPGGEYIPGGKIGWSVCKKYFPEYALSCQRIPGARSGVIEVENLPKMGVSICYEETFGMLLRNYKREGAKLLVNLTNDGWYPSSRLPQVHFYHGILRNQELGMPCVRSCHTGITVAADALGRVIKMLPYETRYRKASPGVLQVSLPMQNYPTLYAFWGDFPMIFLSLLSIGCIGCYFGYRLLAKKEKA.

6 helical membrane-spanning segments follow: residues 21-41, 54-74, 89-109, 116-136, 157-177, and 189-209; these read MSWF…WYSL, LTSL…SWML, VLIS…FFIV, ILWC…YFLC, FGGF…GISF, and YVWL…YEYL. The 282-residue stretch at 219–500 folds into the CN hydrolase domain; sequence LRVAVIQPAS…PGVLQVSLPM (282 aa). Glu-265 serves as the catalytic Proton acceptor. Residue Lys-350 is part of the active site. The active-site Nucleophile is Cys-405. A helical membrane pass occupies residues 506-526; that stretch reads LYAFWGDFPMIFLSLLSIGCI.

Belongs to the CN hydrolase family. Apolipoprotein N-acyltransferase subfamily.

Its subcellular location is the cell inner membrane. The catalysed reaction is N-terminal S-1,2-diacyl-sn-glyceryl-L-cysteinyl-[lipoprotein] + a glycerophospholipid = N-acyl-S-1,2-diacyl-sn-glyceryl-L-cysteinyl-[lipoprotein] + a 2-acyl-sn-glycero-3-phospholipid + H(+). It participates in protein modification; lipoprotein biosynthesis (N-acyl transfer). In terms of biological role, catalyzes the phospholipid dependent N-acylation of the N-terminal cysteine of apolipoprotein, the last step in lipoprotein maturation. This Chlamydia caviae (strain ATCC VR-813 / DSM 19441 / 03DC25 / GPIC) (Chlamydophila caviae) protein is Apolipoprotein N-acyltransferase.